Reading from the N-terminus, the 325-residue chain is MTAEVTAADAEVLLAQPRGFCAGVDRAIDIVERALELHGAPIYVRHEIVHNRYVVEDLRGKGAVFIDELDQAPAGAIVVFSAHGVSQAVRGEAEARGLRVFDATCPLVTKVHIEVARMRAAGREIVMIGHKGHPEVEGTLGQAQGGMYLVETVEDVAALQVSDPGNLAYVTQTTLSVDDAAAVAGALKARFPGIVEPKKSDICYATQNRQDAVKLLAPECDLVLVVGSTNSSNSNRLREVAERKGVAAYLIDGAHAIDPAWLQGRRSIGITAGASAPEVLVQQVVERVRELGAVSVRTMPGLEESVAFPLPKGLSRKIAQTESLE.

C21 provides a ligand contact to [4Fe-4S] cluster. H50 and H83 together coordinate (2E)-4-hydroxy-3-methylbut-2-enyl diphosphate. The dimethylallyl diphosphate site is built by H50 and H83. 2 residues coordinate isopentenyl diphosphate: H50 and H83. A [4Fe-4S] cluster-binding site is contributed by C105. H133 is a binding site for (2E)-4-hydroxy-3-methylbut-2-enyl diphosphate. Residue H133 participates in dimethylallyl diphosphate binding. H133 is an isopentenyl diphosphate binding site. The active-site Proton donor is the E135. T173 is a binding site for (2E)-4-hydroxy-3-methylbut-2-enyl diphosphate. C203 contributes to the [4Fe-4S] cluster binding site. (2E)-4-hydroxy-3-methylbut-2-enyl diphosphate is bound by residues S231, S232, N233, and S275. 4 residues coordinate dimethylallyl diphosphate: S231, S232, N233, and S275. Isopentenyl diphosphate contacts are provided by S231, S232, N233, and S275.

This sequence belongs to the IspH family. It depends on [4Fe-4S] cluster as a cofactor.

It catalyses the reaction isopentenyl diphosphate + 2 oxidized [2Fe-2S]-[ferredoxin] + H2O = (2E)-4-hydroxy-3-methylbut-2-enyl diphosphate + 2 reduced [2Fe-2S]-[ferredoxin] + 2 H(+). It carries out the reaction dimethylallyl diphosphate + 2 oxidized [2Fe-2S]-[ferredoxin] + H2O = (2E)-4-hydroxy-3-methylbut-2-enyl diphosphate + 2 reduced [2Fe-2S]-[ferredoxin] + 2 H(+). The protein operates within isoprenoid biosynthesis; dimethylallyl diphosphate biosynthesis; dimethylallyl diphosphate from (2E)-4-hydroxy-3-methylbutenyl diphosphate: step 1/1. It functions in the pathway isoprenoid biosynthesis; isopentenyl diphosphate biosynthesis via DXP pathway; isopentenyl diphosphate from 1-deoxy-D-xylulose 5-phosphate: step 6/6. In terms of biological role, catalyzes the conversion of 1-hydroxy-2-methyl-2-(E)-butenyl 4-diphosphate (HMBPP) into a mixture of isopentenyl diphosphate (IPP) and dimethylallyl diphosphate (DMAPP). Acts in the terminal step of the DOXP/MEP pathway for isoprenoid precursor biosynthesis. The protein is 4-hydroxy-3-methylbut-2-enyl diphosphate reductase of Bordetella pertussis (strain Tohama I / ATCC BAA-589 / NCTC 13251).